We begin with the raw amino-acid sequence, 3010 residues long: Genome polyprotein (3010 aa).

At serine 2 the chain carries N-acetylserine; by host. Residues 2 to 23 form an interaction with STAT1 region; that stretch reads STNPKPQRKTKRNTNRRPQDVK. The interaction with EIF2AK2/PKR stretch occupies residues 2–58; the sequence is STNPKPQRKTKRNTNRRPQDVKFPGGGQIVGGVYLLPRRGPRLGVRATRKTSERSQP. The interaction with DDX3X stretch occupies residues 2 to 59; it reads STNPKPQRKTKRNTNRRPQDVKFPGGGQIVGGVYLLPRRGPRLGVRATRKTSERSQPR. The segment at 2-75 is disordered; sequence STNPKPQRKT…PKARQPEGRA (74 aa). The Cytoplasmic portion of the chain corresponds to 2 to 168; that stretch reads STNPKPQRKT…EDGVNYATGN (167 aa). 2 consecutive short sequence motifs (nuclear localization signal) follow at residues 5-13 and 38-43; these read PKPQRKTKR and PRRGPR. A compositionally biased stretch (basic residues) spans 7-16; sequence PQRKTKRNTN. Residues 32-47 are compositionally biased toward low complexity; it reads GGVYLLPRRGPRLGVR. Position 53 is a phosphoserine; by host (serine 53). Short sequence motifs (nuclear localization signal) lie at residues 58–64 and 66–71; these read PRGRRQP and PKARQP. Serine 99 carries the phosphoserine; by host modification. The important for endoplasmic reticulum and mitochondrial localization stretch occupies residues 112–152; sequence PRRRSRNLGKVIDTLTCGFADLMGYIPLVGAPLGGVARALA. Residue serine 116 is modified to Phosphoserine; by host PKA. Positions 122–173 are interaction with APOA2; sequence VIDTLTCGFADLMGYIPLVGAPLGGVARALAHGVRVVEDGVNYATGNLPGCS. The tract at residues 164–167 is important for lipid droplets localization; sequence YATG. A helical transmembrane segment spans residues 169–189; it reads LPGCSFSIFLLALLSCLTIPA. The propeptide at 178-191 is ER anchor for the core protein, removed in mature form by host signal peptidase; it reads LLALLSCLTIPASA. The Lumenal segment spans residues 190–358; it reads SAYEVRNVSG…AGAHWGVLAG (169 aa). 4 N-linked (GlcNAc...) asparagine; by host glycosylation sites follow: asparagine 196, asparagine 209, asparagine 234, and asparagine 250. Residues 265–296 form an important for fusion region; the sequence is LVGAAAFCSAMYVGDLCGSVFLVSQLFTFSPR. Asparagine 305 carries N-linked (GlcNAc...) asparagine; by host glycosylation. A helical transmembrane segment spans residues 359–379; it reads LAYYSMVGNWAKVLIVMLLFA. Over 380 to 725 the chain is Lumenal; it reads GVDGETRVTG…WDYIVILFLL (346 aa). The interval 385 to 411 is HVR1; it reads TRVTGGQIARNAYSLTTLFSSGSAQNI. 4 N-linked (GlcNAc...) (high mannose) asparagine; by host glycosylation sites follow: asparagine 417, asparagine 423, asparagine 430, and asparagine 448. 4 cysteine pairs are disulfide-bonded: cysteine 429/cysteine 552, cysteine 452/cysteine 459, cysteine 486/cysteine 494, and cysteine 503/cysteine 508. The HVR2 stretch occupies residues 474–479; it reads YAEQGG. The tract at residues 480 to 493 is CD81-binding 1; sequence QDQRPYCWHYAPKP. N-linked (GlcNAc...) (high mannose) asparagine; by host glycosylation is present at asparagine 532. N-linked (GlcNAc...) asparagine; by host glycosylation occurs at asparagine 540. Residues 544–551 are CD81-binding 2; sequence PPQGNWFG. A glycan (N-linked (GlcNAc...) (high mannose) asparagine; by host) is linked at asparagine 556. Cysteine 564 and cysteine 569 are oxidised to a cystine. An N-linked (GlcNAc...) (high mannose) asparagine; by host glycan is attached at asparagine 576. 3 disulfides stabilise this stretch: cysteine 581/cysteine 585, cysteine 597/cysteine 620, and cysteine 607/cysteine 644. Asparagine 623 and asparagine 645 each carry an N-linked (GlcNAc...) (high mannose) asparagine; by host glycan. Residues cysteine 652 and cysteine 677 are joined by a disulfide bond. The segment at 660-671 is PKR/eIF2-alpha phosphorylation homology domain (PePHD); the sequence is LELSPLLLSTTE. Residues 726 to 746 form a helical membrane-spanning segment; it reads LADARVCACLWMMLLIAQAEA. The Lumenal segment spans residues 747-757; the sequence is ALENLVVLNAA. Residues 758-778 traverse the membrane as a helical segment; that stretch reads SVAGAHGILSFLVFFCAAWYI. Topologically, residues 779-781 are cytoplasmic; that stretch reads KGK. The helical transmembrane segment at 782-803 threads the bilayer; sequence LVPGAAYAFYGVWPLLLLLLAL. Residues 804-813 lie on the Lumenal side of the membrane; sequence PPRAYAMERE. A helical transmembrane segment spans residues 814–834; that stretch reads MAASCGGAVFVGLVLLTLSPY. The Cytoplasmic portion of the chain corresponds to 835-838; that stretch reads YKEF. Residues 839–859 form a helical membrane-spanning segment; that stretch reads LARLIWWLQYFITRAEAHLQV. Residues 860–881 are Lumenal-facing; the sequence is WIPPLNIRGGRDAIILLACVVH. Residues 882-902 form a helical membrane-spanning segment; the sequence is PELIFDITKLLLAILGPLMVL. One can recognise a Peptidase C18 domain in the interval 903–1026; sequence QASITQVPYF…SLEGQGWRLL (124 aa). Residues 903–1657 are Cytoplasmic-facing; it reads QASITQVPYF…CMSADLEVVT (755 aa). The protease NS2-3 stretch occupies residues 904–1206; it reads ASITQVPYFV…PVESMETTMR (303 aa). Cysteine 922 carries the S-palmitoyl cysteine; by host lipid modification. An interaction with host SCPS1 region spans residues 929–949; sequence AGGHYVQMAFVKLTALTGTYV. Active-site for protease NS2 activity; shared with dimeric partner residues include histidine 952, glutamate 972, and cysteine 993. The Peptidase S29 domain maps to 1027 to 1208; sequence APITAYSQQT…ESMETTMRSP (182 aa). Active-site charge relay system; for serine protease NS3 activity residues include histidine 1083 and aspartate 1107. Zn(2+) contacts are provided by cysteine 1123 and cysteine 1125. Serine 1165 serves as the catalytic Charge relay system; for serine protease NS3 activity. Positions 1171 and 1175 each coordinate Zn(2+). The 153-residue stretch at 1217–1369 folds into the Helicase ATP-binding domain; sequence PAVPQTFQVA…PNIEEVALSN (153 aa). Position 1230-1237 (1230-1237) interacts with ATP; it reads APTGSGKS. Serine 1237 and glutamate 1317 together coordinate Mg(2+). A DECH box motif is present at residues 1316–1319; that stretch reads DECH. The RNA-binding stretch occupies residues 1486–1497; that stretch reads QRRGRTGRGRRG. The helical transmembrane segment at 1658–1678 threads the bilayer; that stretch reads STWVLVGGVLAALAAYCLTTG. Residues 1679 to 1690 form an NS3-binding region; sequence SVVIVGRIILSG. Residues 1679–1805 lie on the Cytoplasmic side of the membrane; sequence SVVIVGRIIL…SITSPLSTQN (127 aa). The chain crosses the membrane as a helical span at residues 1806 to 1824; sequence TLLFNIWGGWVAAQLAPPS. Residues 1825–1828 are Lumenal-facing; it reads AASA. Residues 1829 to 1849 form a helical membrane-spanning segment; sequence FVGAGIAGAAVGSIGLGKVLV. Position 1850 (aspartate 1850) is a topological domain, cytoplasmic. The helical transmembrane segment at 1851 to 1871 threads the bilayer; sequence ILAGYGAGVAGALVAFKIMSG. The Lumenal segment spans residues 1872-1881; that stretch reads EVPSTEDLVN. The helical transmembrane segment at 1882–1902 threads the bilayer; it reads LLPAILSPGALVVGVVCAAIL. The Cytoplasmic portion of the chain corresponds to 1903–1972; that stretch reads RRHVGPGEGA…WINEDCSTPC (70 aa). Residues cysteine 1968 and cysteine 1972 are each lipidated (S-palmitoyl cysteine; by host). The stretch at 1973–2002 is an intramembrane region; it reads SGSWLRDVWDWICTVLTDFKTWLQSKLLPR. Over 2003-2989 the chain is Cytoplasmic; that stretch reads LPGVPFFSCQ…YHSLSRARPR (987 aa). Residues cysteine 2011, cysteine 2029, cysteine 2031, and cysteine 2052 each coordinate Zn(2+). The tract at residues 2120 to 2208 is FKBP8-binding; it reads EFFTEVDGVR…ASSSASQLSA (89 aa). A transcriptional activation region spans residues 2120-2332; it reads EFFTEVDGVR…PIPPPRRKRT (213 aa). The segment at 2135-2139 is interaction with non-structural protein 4A; the sequence is PACKP. The interval 2189-2441 is interaction with host SKP2; it reads RLARGSPPSL…PCAAEESKLP (253 aa). A Phosphoserine; by host; in p56 modification is found at serine 2194. A phosphoserine; by host; in p58 mark is found at serine 2197, serine 2201, serine 2204, serine 2207, and serine 2210. Residues 2210 to 2249 form an ISDR region; it reads SLKATCTTHHDSPDVDLIEANLLWRQEMGGNITRVESENK. The tract at residues 2210–2275 is interaction with EIF2AK2/PKR; it reads SLKATCTTHH…REPSVAAEIL (66 aa). Residues 2249–2306 form an NS4B-binding region; the sequence is KVVILDSFDPLRAEEDEREPSVAAEILRKTKRFPPAMPIWARPDYNPPLLESWKDPDY. The SH3-binding signature appears at 2322-2325; sequence PPIP. The Nuclear localization signal signature appears at 2326–2334; sequence PPRRKRTVV. A Glycyl lysine isopeptide (Lys-Gly) (interchain with G-Cter in ubiquitin) cross-link involves residue lysine 2350. Polar residues predominate over residues 2351–2365; the sequence is TFGSSGSSAVDSGTA. Residues 2351–2407 form a disordered region; sequence TFGSSGSSAVDSGTATAPPDQASDDGDQGSDVESYSSMPPLEGEPGDPDLSDGSWST. The V3 stretch occupies residues 2354–2377; it reads SSGSSAVDSGTATAPPDQASDDGD. A phosphoserine; by host mark is found at serine 2448 and serine 2461. Positions 2633–2751 constitute a RdRp catalytic domain; sequence PMGFSYDTRC…ICESAGTQED (119 aa). Mg(2+) contacts are provided by aspartate 2639, aspartate 2737, and aspartate 2738. The chain crosses the membrane as a helical span at residues 2990 to 3010; the sequence is WFMLCLLLLSVGVGIYLLPNR.

It belongs to the hepacivirus polyprotein family. As to quaternary structure, homooligomer. Interacts with E1 (via C-terminus). Interacts with the non-structural protein 5A. Interacts (via N-terminus) with host STAT1 (via SH2 domain); this interaction results in decreased STAT1 phosphorylation and ubiquitin-mediated proteasome-dependent STAT1 degradation, leading to decreased IFN-stimulated gene transcription. Interacts with host STAT3; this interaction constitutively activates STAT3. Interacts with host LTBR receptor. Interacts with host TNFRSF1A receptor and possibly induces apoptosis. Interacts with host HNRPK. Interacts with host YWHAE. Interacts with host UBE3A/E6AP. Interacts with host DDX3X. Interacts with host APOA2. Interacts with host RXRA protein. Interacts with host SP110 isoform 3/Sp110b; this interaction sequesters the transcriptional corepressor SP110 away from the nucleus. Interacts with host CREB3 nuclear transcription protein; this interaction triggers cell transformation. Interacts with host ACY3. Interacts with host C1QR1. Interacts with host RBM24; this interaction, which enhances the interaction of the mature core protein with 5'-UTR, may inhibit viral translation and favor replication. Interacts with host EIF2AK2/PKR; this interaction induces the autophosphorylation of EIF2AK2. Part of the viral assembly initiation complex composed of NS2, E1, E2, NS3, NS4A, NS5A and the mature core protein. Forms a heterodimer with envelope glycoprotein E2. Interacts with mature core protein. Interacts with protease NS2. The heterodimer E1/E2 interacts with host CLDN1; this interaction plays a role in viral entry into host cell. Interacts with host SPSB2 (via C-terminus). Part of the viral assembly initiation complex composed of NS2, E1, E2, NS3, NS4A, NS5A and the mature core protein. Interacts with host NEURL3; this interaction prevents E1 binding to glycoprotein E2. In terms of assembly, forms a heterodimer with envelope glycoprotein E1. Interacts with host CD81 and SCARB1 receptors; these interactions play a role in viral entry into host cell. Interacts with host EIF2AK2/PKR; this interaction inhibits EIF2AK2 and probably allows the virus to evade the innate immune response. Interacts with host CD209/DC-SIGN and CLEC4M/DC-SIGNR. Interact with host SPCS1; this interaction is essential for viral particle assembly. Interacts with protease NS2. The heterodimer E1/E2 interacts with host CLDN1; this interaction plays a role in viral entry into host cell. Part of the viral assembly initiation complex composed of NS2, E1, E2, NS3, NS4A, NS5A and the mature core protein. Interacts with host SLC3A2/4F2hc; the interaction may facilitate viral entry into host cell. Interacts with human PLSCR1. As to quaternary structure, homohexamer. Homoheptamer. Interacts with protease NS2. Homodimer. Interacts with host SPCS1; this interaction is essential for viral particle assembly. Interacts with envelope glycoprotein E1. Interacts with envelope glycoprotein E2. Interacts with viroporin p7. Interacts with serine protease/helicase NS3. Part of the replication complex composed of NS2, NS3, NS4A, NS4B, NS5A and the RNA-directed RNA polymerase embedded in an ER-derived membranous web. Part of the viral assembly initiation complex composed of NS2, E1, E2, NS3, NS4A, NS5A and the mature core protein. In terms of assembly, interacts with protease NS2. Interacts with non-structural protein 4A; this interaction stabilizes the folding of NS3 serine protease. NS3-NS4A interaction is essential for NS3 activation and allows membrane anchorage of the latter. NS3/NS4A complex also prevents phosphorylation of host IRF3, thus preventing the establishment of dsRNA induced antiviral state. Interacts with host MAVS; this interaction leads to the cleavage and inhibition of host MAVS. Interacts with host TICAM1; this interaction leads to the cleavage and inhibition of host TICAM1. Interacts with host TANK-binding kinase/TBK1; this interaction results in the inhibition of the association between TBK1 and IRF3, which leads to the inhibition of IRF3 activation. Interacts with host RBM24. Part of the replication complex composed of NS2, NS3, NS4A, NS4B, NS5A and the RNA-directed RNA polymerase embedded in an ER-derived membranous web. Part of the viral assembly initiation complex composed of NS2, E1, E2, NS3, NS4A, NS5A and the mature core protein. As to quaternary structure, interacts with NS3 serine protease; this interaction stabilizes the folding of NS3 serine protease. NS3-NS4A interaction is essential for NS3 activation and allows membrane anchorage of the latter. Interacts with non-structural protein 5A (via N-terminus). Part of the replication complex composed of NS2, NS3, NS4A, NS4B, NS5A and the RNA-directed RNA polymerase embedded in an ER-derived membranous web. Part of the viral assembly initiation complex composed of NS2, E1, E2, NS3, NS4A, NS5A and the mature core protein. Homomultimer. Interacts with non-structural protein NS5A. Interacts with host PLA2G4C; this interaction likely initiates the recruitment of replication complexes to lipid droplets. Interacts with host STING; this interaction disrupts the interaction between STING and TBK1 thereby suppressing the interferon signaling. Part of the replication complex composed of NS2, NS3, NS4A, NS4B, NS5A and the RNA-directed RNA polymerase embedded in an ER-derived membranous web. In terms of assembly, monomer. Homodimer; dimerization is required for RNA-binding. Interacts with the mature core protein. Interacts (via N-terminus) with non-structural protein 4A. Interacts with non-structural protein 4B. Interacts (via region D2) with RNA-directed RNA polymerase. Part of the viral assembly initiation complex composed of NS2, E1, E2, NS3, NS4A, NS5A and the mature core protein. Part of the replication complex composed of NS2, NS3, NS4A, NS4B, NS5A and the RNA-directed RNA polymerase embedded in an ER-derived membranous web. Interacts with host GRB2. Interacts with host BIN1. Interacts with host PIK3R1. Interacts with host SRCAP. Interacts with host FKBP8. Interacts (via C-terminus) with host VAPB (via MSP domain). Interacts with host EIF2AK2/PKR; this interaction leads to disruption of EIF2AK2 dimerization by NS5A and probably allows the virus to evade the innate immune response. Interacts (via N-terminus) with host PACSIN2 (via N-terminus); this interaction attenuates protein kinase C alpha-mediated phosphorylation of PACSIN2 by disrupting the interaction between PACSIN2 and PRKCA. Interacts (via N-terminus) with host SRC kinase (via SH2 domain). Interacts with most Src-family kinases. Interacts with host IFI27 and SKP2; promotes the ubiquitin-mediated proteasomal degradation of NS5A. Interacts with host GPS2. Interacts with host TNFRSF21; this interaction allows the modulation by the virus of JNK, p38 MAPK, STAT3, and Akt signaling pathways in a DR6-dependent manner. Interacts (via N-terminus) with host CIDEB (via N-terminus); this interaction seems to regulate the association of HCV particles with APOE. Interacts with host CHKA/Choline Kinase-alpha; CHKA bridges host PI4KA and NS5A and potentiates NS5A-stimulated PI4KA activity, which then facilitates the targeting of the ternary complex to the ER for viral replication. Interacts with host SPSB2 (via C-terminus); this interaction targets NS5A for ubiquitination and degradation. Interacts with host RAB18; this interaction may promote the association of NS5A and other replicase components with lipid droplets. Interacts (via region D2) with host PPIA/CYPA; the interaction stimulates RNA-binding ability of NS5A and is dependent on the peptidyl-prolyl cis-trans isomerase activity of PPIA/CYPA. Interacts with host TRIM14; this interaction induces the degradation of NS5A. As to quaternary structure, homooligomer. Interacts with non-structural protein 5A. Interacts with host VAPB. Interacts with host PRK2/PKN2. Interacts with host HNRNPA1 and SEPT6; these interactions facilitate viral replication. Part of the replication complex composed of NS2, NS3, NS4A, NS4B, NS5A and the RNA-directed RNA polymerase. The cofactor is Zn(2+). Mg(2+) serves as cofactor. Specific enzymatic cleavages in vivo yield mature proteins. The structural proteins, core, E1, E2 and p7 are produced by proteolytic processing by host signal peptidases. The core protein precursor is synthesized as a 23 kDa, which is retained in the ER membrane through the hydrophobic signal peptide. Cleavage by the signal peptidase releases the 21 kDa mature core protein. The cleavage of the core protein precursor occurs between aminoacids 176 and 188 but the exact cleavage site is not known. Some degraded forms of the core protein appear as well during the course of infection. The other proteins (p7, NS2, NS3, NS4A, NS4B, NS5A and NS5B) are cleaved by the viral proteases. Autoprocessing between NS2 and NS3 is mediated by the NS2 cysteine protease catalytic domain and regulated by the NS3 N-terminal domain. Post-translationally, phosphorylated by host PKC and PKA. In terms of processing, ubiquitinated; mediated by UBE3A and leading to core protein subsequent proteasomal degradation. Highly N-glycosylated. Post-translationally, palmitoylation is required for NS2/3 autoprocessing and E2 recruitment to membranes. In terms of processing, palmitoylated. This modification may play a role in its polymerization or in protein-protein interactions. Phosphorylated on serines in a basal form termed p56. p58 is a hyperphosphorylated form of p56. p56 and p58 coexist in the cell in roughly equivalent amounts. Hyperphosphorylation is dependent on the presence of NS4A. Host CSNK1A1/CKI-alpha or RPS6KB1 kinases may be responsible for NS5A phosphorylation. Post-translationally, tyrosine phosphorylation is essential for the interaction with host SRC. In terms of processing, ubiquitinated. Ubiquitination, most probably at Lys-2350, mediated by host IFI27 and SKP2 leads to proteasomal degradation, restricting viral infection. Ubiquitination by host TRIM22 leads to interruption of viral replication. The N-terminus is phosphorylated by host PRK2/PKN2.

Its subcellular location is the host endoplasmic reticulum membrane. It is found in the host mitochondrion membrane. The protein localises to the virion. It localises to the host cytoplasm. The protein resides in the host nucleus. Its subcellular location is the host lipid droplet. It is found in the virion membrane. The protein localises to the host mitochondrion. It localises to the host cell membrane. The protein resides in the host perinuclear region. It carries out the reaction Hydrolysis of four peptide bonds in the viral precursor polyprotein, commonly with Asp or Glu in the P6 position, Cys or Thr in P1 and Ser or Ala in P1'.. The enzyme catalyses a ribonucleoside 5'-triphosphate + H2O = a ribonucleoside 5'-diphosphate + phosphate + H(+). The catalysed reaction is ATP + H2O = ADP + phosphate + H(+). It catalyses the reaction RNA(n) + a ribonucleoside 5'-triphosphate = RNA(n+1) + diphosphate. Its activity is regulated as follows. Inhibited by the antiviral drug hexamethylene amiloride. Inhibition by amantadine appears to be genotype-dependent. Also inhibited by long-alkyl-chain iminosugar derivatives. Activity is up-regulated by PRK2/PKN2-mediated phosphorylation. Packages viral RNA to form a viral nucleocapsid, and promotes virion budding. Participates in the viral particle production as a result of its interaction with the non-structural protein 5A. Binds RNA and may function as a RNA chaperone to induce the RNA structural rearrangements taking place during virus replication. Modulates viral translation initiation by interacting with viral IRES and 40S ribosomal subunit. Affects various cell signaling pathways, host immunity and lipid metabolism. Prevents the establishment of cellular antiviral state by blocking the interferon-alpha/beta (IFN-alpha/beta) and IFN-gamma signaling pathways and by blocking the formation of phosphorylated STAT1 and promoting ubiquitin-mediated proteasome-dependent degradation of STAT1. Activates STAT3 leading to cellular transformation. Regulates the activity of cellular genes, including c-myc and c-fos. May repress the promoter of p53, and sequester CREB3 and SP110 isoform 3/Sp110b in the cytoplasm. Represses cell cycle negative regulating factor CDKN1A, thereby interrupting an important check point of normal cell cycle regulation. Targets transcription factors involved in the regulation of inflammatory responses and in the immune response: suppresses TNF-induced NF-kappa-B activation, and activates AP-1. Binds to dendritic cells (DCs) via C1QR1, resulting in down-regulation of T-lymphocytes proliferation. Alters lipid metabolism by interacting with hepatocellular proteins involved in lipid accumulation and storage. Induces up-regulation of FAS promoter activity, and thereby contributes to the increased triglyceride accumulation in hepatocytes (steatosis). Functionally, forms a heterodimer with envelope glycoprotein E2, which mediates virus attachment to the host cell, virion internalization through clathrin-dependent endocytosis and fusion with host membrane. Fusion with the host cell is most likely mediated by both E1 and E2, through conformational rearrangements of the heterodimer required for fusion rather than a classical class II fusion mechanism. E1/E2 heterodimer binds host apolipoproteins such as APOB and APOE thereby forming a lipo-viro-particle (LVP). APOE associated to the LVP allows the initial virus attachment to cell surface receptors such as the heparan sulfate proteoglycans (HSPGs), syndecan-1 (SDC1), syndecan-1 (SDC2), the low-density lipoprotein receptor (LDLR) and scavenger receptor class B type I (SCARB1). The cholesterol transfer activity of SCARB1 allows E2 exposure and binding of E2 to SCARB1 and the tetraspanin CD81. E1/E2 heterodimer binding on CD81 activates the epithelial growth factor receptor (EGFR) signaling pathway. Diffusion of the complex E1-E2-EGFR-SCARB1-CD81 to the cell lateral membrane allows further interaction with Claudin 1 (CLDN1) and occludin (OCLN) to finally trigger HCV entry. In terms of biological role, forms a heterodimer with envelope glycoprotein E1, which mediates virus attachment to the host cell, virion internalization through clathrin-dependent endocytosis and fusion with host membrane. Fusion with the host cell is most likely mediated by both E1 and E2, through conformational rearrangements of the heterodimer required for fusion rather than a classical class II fusion mechanism. The interaction between envelope glycoprotein E2 and host apolipoprotein E/APOE allows the proper assembly, maturation and infectivity of the viral particles. This interaction is probably promoted via the up-regulation of cellular autophagy by the virus. E1/E2 heterodimer binds host apolipoproteins such as APOB and APOE thereby forming a lipo-viro-particle (LVP). APOE associated to the LVP allows the initial virus attachment to cell surface receptors such as the heparan sulfate proteoglycans (HSPGs), syndecan-1 (SDC1), syndecan-1 (SDC2), the low-density lipoprotein receptor (LDLR) and scavenger receptor class B type I (SCARB1). The cholesterol transfer activity of SCARB1 allows E2 exposure and binding of E2 to SCARB1 and the tetraspanin CD81. E1/E2 heterodimer binding on CD81 activates the epithelial growth factor receptor (EGFR) signaling pathway. Diffusion of the complex E1-E2-EGFR-SCARB1-CD81 to the cell lateral membrane allows further interaction with Claudin 1 (CLDN1) and occludin (OCLN) to finally trigger HCV entry. Inhibits host EIF2AK2/PKR activation, preventing the establishment of an antiviral state. Viral ligand for CD209/DC-SIGN and CLEC4M/DC-SIGNR, which are respectively found on dendritic cells (DCs), and on liver sinusoidal endothelial cells and macrophage-like cells of lymph node sinuses. These interactions allow the capture of circulating HCV particles by these cells and subsequent facilitated transmission to permissive cells such as hepatocytes and lymphocyte subpopulations. The interaction between E2 and host amino acid transporter complex formed by SLC3A2 and SLC7A5/LAT1 may facilitate viral entry into host cell. Its function is as follows. Ion channel protein that acts as a viroporin and plays an essential role in the assembly, envelopment and secretion of viral particles. Regulates the host cell secretory pathway, which induces the intracellular retention of viral glycoproteins and favors assembly of viral particles. Creates a pore in acidic organelles and releases Ca(2+) and H(+) in the cytoplasm of infected cells, leading to a productive viral infection. High levels of cytoplasmic Ca(2+) may trigger membrane trafficking and transport of viral ER-associated proteins to viroplasms, sites of viral genome replication. This ionic imbalance induces the assembly of the inflammasome complex, which triggers the maturation of pro-IL-1beta into IL-1beta through the action of caspase-1. Targets also host mitochondria and induces mitochondrial depolarization. In addition of its role as a viroporin, acts as a lipid raft adhesion factor. Cysteine protease required for the proteolytic auto-cleavage between the non-structural proteins NS2 and NS3. The N-terminus of NS3 is required for the function of NS2 protease (active region NS2-3). Promotes the initiation of viral particle assembly by mediating the interaction between structural and non-structural proteins. Functionally, displays three enzymatic activities: serine protease with a chymotrypsin-like fold, NTPase and RNA helicase. NS3 serine protease, in association with NS4A, is responsible for the cleavages of NS3-NS4A, NS4A-NS4B, NS4B-NS5A and NS5A-NS5B. The NS3/NS4A complex prevents phosphorylation of host IRF3, thus preventing the establishment of dsRNA induced antiviral state. The NS3/NS4A complex induces host amino acid transporter component SLC3A2, thus contributing to HCV propagation. NS3 RNA helicase binds to RNA and unwinds both dsDNA and dsRNA in the 3' to 5' direction, and likely resolves RNA complicated stable secondary structures in the template strand. Binds a single ATP and catalyzes the unzipping of a single base pair of dsRNA. Inhibits host antiviral proteins TBK1 and IRF3 thereby preventing the establishment of an antiviral state. Cleaves host MAVS/CARDIF thereby preventing the establishment of an antiviral state. Cleaves host TICAM1/TRIF, thereby disrupting TLR3 signaling and preventing the establishment of an antiviral state. In terms of biological role, peptide cofactor which forms a non-covalent complex with the N-terminal of NS3 serine protease. The NS3/NS4A complex prevents phosphorylation of host IRF3, thus preventing the establishment of dsRNA induced antiviral state. The NS3/NS4A complex induces host amino acid transporter component SLC3A2, thus contributing to HCV propagation. Its function is as follows. Induces a specific membrane alteration that serves as a scaffold for the virus replication complex. This membrane alteration gives rise to the so-called ER-derived membranous web that contains the replication complex. NS4B self-interaction contributes to its function in membranous web formation. Promotes host TRIF protein degradation in a CASP8-dependent manner thereby inhibiting host TLR3-mediated interferon signaling. Disrupts the interaction between STING and TBK1 contributing to the inhibition of interferon signaling. Phosphorylated protein that is indispensable for viral replication and assembly. Both hypo- and hyperphosphorylated states are required for the viral life cycle. The hyperphosphorylated form of NS5A is an inhibitor of viral replication. Involved in RNA-binding and especially in binding to the viral genome. Zinc is essential for RNA-binding. Participates in the viral particle production as a result of its interaction with the mature viral core protein. Its interaction with host VAPB may target the viral replication complex to vesicles. Down-regulates viral IRES translation initiation. Mediates interferon resistance, presumably by interacting with and inhibiting host EIF2AK2/PKR. Prevents BIN1-induced apoptosis. Acts as a transcriptional activator of some host genes important for viral replication when localized in the nucleus. Via the interaction with host PACSIN2, modulates lipid droplet formation in order to promote virion assembly. Modulates TNFRSF21/DR6 signaling pathway for viral propagation. Functionally, RNA-dependent RNA polymerase that performs primer-template recognition and RNA synthesis during viral replication. Initiates RNA transcription/replication at a flavin adenine dinucleotide (FAD), resulting in a 5'- FAD cap on viral RNAs. In this way, recognition of viral 5' RNA by host pattern recognition receptors can be bypassed, thereby evading activation of antiviral pathways. This is Genome polyprotein from Homo sapiens (Human).